Here is a 257-residue protein sequence, read N- to C-terminus: NAD-capped RNA hydrolase NudC (257 aa).

Position 69 (Arg-69) interacts with substrate. Cys-98 and Cys-101 together coordinate Zn(2+). Glu-111 is a substrate binding site. Residues Cys-116 and Cys-119 each contribute to the Zn(2+) site. Residue Tyr-124 coordinates substrate. The 124-residue stretch at 125-248 (PQIAPCIIVA…TVARRLIEDT (124 aa)) folds into the Nudix hydrolase domain. Residues Ala-158, Glu-174, and Glu-178 each contribute to the a divalent metal cation site. The Nudix box motif lies at 159-180 (GFVEVGETLEQAVAREVMEESG). 192 to 199 (QPWPFPQS) contributes to the substrate binding site. Residue Glu-219 participates in a divalent metal cation binding. Ala-241 provides a ligand contact to substrate.

The protein belongs to the Nudix hydrolase family. NudC subfamily. In terms of assembly, homodimer. Requires Mg(2+) as cofactor. The cofactor is Mn(2+). Zn(2+) serves as cofactor.

It catalyses the reaction a 5'-end NAD(+)-phospho-ribonucleoside in mRNA + H2O = a 5'-end phospho-adenosine-phospho-ribonucleoside in mRNA + beta-nicotinamide D-ribonucleotide + 2 H(+). The catalysed reaction is NAD(+) + H2O = beta-nicotinamide D-ribonucleotide + AMP + 2 H(+). The enzyme catalyses NADH + H2O = reduced beta-nicotinamide D-ribonucleotide + AMP + 2 H(+). Functionally, mRNA decapping enzyme that specifically removes the nicotinamide adenine dinucleotide (NAD) cap from a subset of mRNAs by hydrolyzing the diphosphate linkage to produce nicotinamide mononucleotide (NMN) and 5' monophosphate mRNA. The NAD-cap is present at the 5'-end of some mRNAs and stabilizes RNA against 5'-processing. Has preference for mRNAs with a 5'-end purine. Catalyzes the hydrolysis of a broad range of dinucleotide pyrophosphates. This is NAD-capped RNA hydrolase NudC from Salmonella typhimurium (strain LT2 / SGSC1412 / ATCC 700720).